The following is a 435-amino-acid chain: Tol-Pal system protein TolB (435 aa).

A signal peptide spans methionine 1–alanine 20.

This sequence belongs to the TolB family. As to quaternary structure, the Tol-Pal system is composed of five core proteins: the inner membrane proteins TolA, TolQ and TolR, the periplasmic protein TolB and the outer membrane protein Pal. They form a network linking the inner and outer membranes and the peptidoglycan layer.

It is found in the periplasm. In terms of biological role, part of the Tol-Pal system, which plays a role in outer membrane invagination during cell division and is important for maintaining outer membrane integrity. The chain is Tol-Pal system protein TolB from Francisella tularensis subsp. holarctica (strain LVS).